A 941-amino-acid polypeptide reads, in one-letter code: Glycine dehydrogenase (decarboxylating) (941 aa).

Lys-692 carries the post-translational modification N6-(pyridoxal phosphate)lysine.

It belongs to the GcvP family. In terms of assembly, the glycine cleavage system is composed of four proteins: P, T, L and H. It depends on pyridoxal 5'-phosphate as a cofactor.

It carries out the reaction N(6)-[(R)-lipoyl]-L-lysyl-[glycine-cleavage complex H protein] + glycine + H(+) = N(6)-[(R)-S(8)-aminomethyldihydrolipoyl]-L-lysyl-[glycine-cleavage complex H protein] + CO2. Functionally, the glycine cleavage system catalyzes the degradation of glycine. The P protein binds the alpha-amino group of glycine through its pyridoxal phosphate cofactor; CO(2) is released and the remaining methylamine moiety is then transferred to the lipoamide cofactor of the H protein. The sequence is that of Glycine dehydrogenase (decarboxylating) from Mycolicibacterium paratuberculosis (strain ATCC BAA-968 / K-10) (Mycobacterium paratuberculosis).